Reading from the N-terminus, the 493-residue chain is 3-octaprenyl-4-hydroxybenzoate carboxy-lyase (493 aa).

Mn(2+) is bound at residue Asn177. Residues 180–182, 194–196, and 199–200 contribute to the prenylated FMN site; these read IYR, RWL, and RG. Glu243 is a binding site for Mn(2+). Asp292 serves as the catalytic Proton donor.

Belongs to the UbiD family. As to quaternary structure, homohexamer. Prenylated FMN is required as a cofactor. It depends on Mn(2+) as a cofactor.

Its subcellular location is the cell membrane. The enzyme catalyses a 4-hydroxy-3-(all-trans-polyprenyl)benzoate + H(+) = a 2-(all-trans-polyprenyl)phenol + CO2. The protein operates within cofactor biosynthesis; ubiquinone biosynthesis. Functionally, catalyzes the decarboxylation of 3-octaprenyl-4-hydroxy benzoate to 2-octaprenylphenol, an intermediate step in ubiquinone biosynthesis. This Colwellia psychrerythraea (strain 34H / ATCC BAA-681) (Vibrio psychroerythus) protein is 3-octaprenyl-4-hydroxybenzoate carboxy-lyase.